We begin with the raw amino-acid sequence, 433 residues long: Pyrimidine-nucleoside phosphorylase (433 aa).

81–83 contributes to the phosphate binding site; the sequence is KHS. Gly88 and Thr90 together coordinate K(+). Residues Thr92, 108-110, and Thr120 contribute to the phosphate site; that span reads KMS. 2 residues coordinate substrate: Arg168 and Lys187. Residues Leu243, Ala246, and Glu255 each contribute to the K(+) site.

Belongs to the thymidine/pyrimidine-nucleoside phosphorylase family. In terms of assembly, homodimer. K(+) serves as cofactor.

The catalysed reaction is uridine + phosphate = alpha-D-ribose 1-phosphate + uracil. The enzyme catalyses thymidine + phosphate = 2-deoxy-alpha-D-ribose 1-phosphate + thymine. It carries out the reaction 2'-deoxyuridine + phosphate = 2-deoxy-alpha-D-ribose 1-phosphate + uracil. Its function is as follows. Catalyzes phosphorolysis of the pyrimidine nucleosides uridine, thymidine and 2'-deoxyuridine with the formation of the corresponding pyrimidine base and ribose-1-phosphate. This chain is Pyrimidine-nucleoside phosphorylase (pdp), found in Staphylococcus aureus (strain NCTC 8325 / PS 47).